A 337-amino-acid polypeptide reads, in one-letter code: Dihydroorotate dehydrogenase (quinone) (337 aa).

Residues 62-66 (AGLDK) and T86 each bind FMN. A substrate-binding site is contributed by K66. 111–115 (NRMGF) provides a ligand contact to substrate. Positions 140 and 173 each coordinate FMN. A substrate-binding site is contributed by N173. The active-site Nucleophile is the S176. N178 contributes to the substrate binding site. Positions 218 and 246 each coordinate FMN. 247 to 248 (NT) serves as a coordination point for substrate. FMN is bound by residues G269, G298, and 319–320 (YS).

The protein belongs to the dihydroorotate dehydrogenase family. Type 2 subfamily. Monomer. FMN is required as a cofactor.

The protein localises to the cell membrane. The enzyme catalyses (S)-dihydroorotate + a quinone = orotate + a quinol. It functions in the pathway pyrimidine metabolism; UMP biosynthesis via de novo pathway; orotate from (S)-dihydroorotate (quinone route): step 1/1. Functionally, catalyzes the conversion of dihydroorotate to orotate with quinone as electron acceptor. The chain is Dihydroorotate dehydrogenase (quinone) from Wigglesworthia glossinidia brevipalpis.